The following is a 462-amino-acid chain: Sensor histidine kinase RegB (462 aa).

The Cytoplasmic segment spans residues 1 to 25; it reads MILGPDGILNRDTRGDWVRLRTLIL. The helical transmembrane segment at 26 to 45 threads the bilayer; the sequence is LRWMAVAGQLAAIVVTDWYL. Residues 46–51 lie on the Extracellular side of the membrane; sequence GVRLPM. The chain crosses the membrane as a helical span at residues 52-70; that stretch reads GLCFMAVGASVIANVIATF. Residues 71–78 are Cytoplasmic-facing; the sequence is VFPQNRRL. Residues 79-96 traverse the membrane as a helical segment; that stretch reads TEFQALMILLFDLTQLSF. Residues 97 to 103 are Extracellular-facing; it reads LLFLTGG. The helical transmembrane segment at 104-123 threads the bilayer; the sequence is LTNPFALLILAPVTISALAL. The Cytoplasmic portion of the chain corresponds to 124 to 129; the sequence is ELRTTV. A helical membrane pass occupies residues 130–149; the sequence is ILGAIAIGLLTFTAYFHLPL. Residues 150–164 lie on the Extracellular side of the membrane; the sequence is ILADGSSLSVPRMFE. The helical transmembrane segment at 165-182 threads the bilayer; that stretch reads FGFWLAIVIGILFLGLYS. Topologically, residues 183 to 462 are cytoplasmic; the sequence is RRVAIEIRSM…PLGENVLIQT (280 aa). The Histidine kinase domain occupies 218 to 445; sequence AAAHELGTPL…IVEVIWPVDR (228 aa). His221 carries the phosphohistidine; by autocatalysis modification.

It is found in the cell inner membrane. The catalysed reaction is ATP + protein L-histidine = ADP + protein N-phospho-L-histidine.. Functionally, member of the two-component regulatory system RegB/RegA. Involved in the positive regulation of photosynthesis gene expression in response to anaerobiosis. Also involved in positive regulation of the cbbI and cbbII Calvin cycle CO2 fixation operons, as well as in regulation of expression of genes involved in alternative CO2 fixation pathways. Phosphorylates RegA/PrrA. The chain is Sensor histidine kinase RegB (regB) from Cereibacter sphaeroides (strain ATCC 17023 / DSM 158 / JCM 6121 / CCUG 31486 / LMG 2827 / NBRC 12203 / NCIMB 8253 / ATH 2.4.1.) (Rhodobacter sphaeroides).